The chain runs to 624 residues: MKTQKKEVYNFQSETKKLLHLMIHSLYSNKEIFLRELISNSSDAIDKLRFESISSPELYENDSDVKIQISINKAQRTLIISDNGIGMTKEDTIENLGTIAKSGTKSFLQSLEQKQNKKNELIGEFGVGFYSSFIVSEKVSVRTRFAGLESNKGILWESSGEGEYNITNIVKKTRGTEITLFLKKEEEEFLETWRIKNIISKYSDHITIPIHIQDYDKKNKTYFWEQINKAKALWTLNKSSITEEEYKDFYKHLTNDQNDPLIWSHNHVEGNQEYISLLYIPEKAAWDIWNRDNKHGLKLYVKRVYIMDNSQAFLPNYLRFIKGLIDSSDLPLNISREILQDNSITEKLRKSLIKKSLSMLEKLAQKNNEKYQIFWNQFGLVLKEGPAEDHENLNKIANLLRFTSMKSNNSEQKMSLKEYISNMNEQQEKIYYITADSYSSANNSPHLELFKKNNIDVLLLSDRIDEWMMNYLSEFEGKKFQSISKEDISLNKLTKEKKIKNKDVSTEMIEFLKKVKNILGNQVKDVRLTHRLTETPCVLLSDSTEMTTQMAKLFSAAGQSVPELKYIFEINPDHILIKKICTINNENELHQWIKLLLDQALLAEKGNLENPHKFISRMNKLLIK.

The tract at residues 1-336 is a; substrate-binding; it reads MKTQKKEVYN…SSDLPLNISR (336 aa). Positions 337–552 are b; that stretch reads EILQDNSITE…STEMTTQMAK (216 aa). The c stretch occupies residues 553–624; sequence LFSAAGQSVP…ISRMNKLLIK (72 aa).

This sequence belongs to the heat shock protein 90 family. Homodimer.

It localises to the cytoplasm. Functionally, molecular chaperone. Has ATPase activity. The sequence is that of Chaperone protein HtpG from Buchnera aphidicola subsp. Acyrthosiphon pisum (strain APS) (Acyrthosiphon pisum symbiotic bacterium).